The sequence spans 181 residues: SecB-like chaperone Rv1957 (181 aa).

The residue at position 2 (T2) is an N-acetylthreonine.

This sequence belongs to the SecB-like family. In terms of assembly, homotetramer, interacts with antitoxin HigA1.

Functionally, chaperone component of an atypical, type II toxin-antitoxin chaperone (TAC) system. Prevents antitoxin HigA1 aggregation in vitro at a 1:3 chaperone:antitoxin ratio, probably also protects antitoxin HigA1 from protease. Required for neutralization of toxin HigB1 upon ectopic expression in Mycobacterium marinum or E.coli. When expressed in E.coli complements a secB deletion, restores export of OmpA and MBP and inhibits aggregation of proOmpC although it is less efficient than endogenous SecB. Complements the general chaperone function of E.coli SecB less well. This chain is SecB-like chaperone Rv1957 (secBL), found in Mycobacterium tuberculosis (strain ATCC 25618 / H37Rv).